The sequence spans 451 residues: 3-phosphoshikimate 1-carboxyvinyltransferase (451 aa).

Residues Lys28, Ser29, and Arg33 each coordinate 3-phosphoshikimate. A phosphoenolpyruvate-binding site is contributed by Lys28. Phosphoenolpyruvate contacts are provided by Gly105 and Arg133. Positions 178, 180, 331, and 358 each coordinate 3-phosphoshikimate. A phosphoenolpyruvate-binding site is contributed by Gln180. Asp331 acts as the Proton acceptor in catalysis. 2 residues coordinate phosphoenolpyruvate: Arg362 and Arg406.

It belongs to the EPSP synthase family. In terms of assembly, monomer.

It localises to the cytoplasm. It carries out the reaction 3-phosphoshikimate + phosphoenolpyruvate = 5-O-(1-carboxyvinyl)-3-phosphoshikimate + phosphate. The protein operates within metabolic intermediate biosynthesis; chorismate biosynthesis; chorismate from D-erythrose 4-phosphate and phosphoenolpyruvate: step 6/7. Functionally, catalyzes the transfer of the enolpyruvyl moiety of phosphoenolpyruvate (PEP) to the 5-hydroxyl of shikimate-3-phosphate (S3P) to produce enolpyruvyl shikimate-3-phosphate and inorganic phosphate. This chain is 3-phosphoshikimate 1-carboxyvinyltransferase, found in Rhodospirillum rubrum (strain ATCC 11170 / ATH 1.1.1 / DSM 467 / LMG 4362 / NCIMB 8255 / S1).